The sequence spans 96 residues: Aspartyl/glutamyl-tRNA(Asn/Gln) amidotransferase subunit C (96 aa).

The protein belongs to the GatC family. As to quaternary structure, heterotrimer of A, B and C subunits.

The catalysed reaction is L-glutamyl-tRNA(Gln) + L-glutamine + ATP + H2O = L-glutaminyl-tRNA(Gln) + L-glutamate + ADP + phosphate + H(+). It catalyses the reaction L-aspartyl-tRNA(Asn) + L-glutamine + ATP + H2O = L-asparaginyl-tRNA(Asn) + L-glutamate + ADP + phosphate + 2 H(+). Its function is as follows. Allows the formation of correctly charged Asn-tRNA(Asn) or Gln-tRNA(Gln) through the transamidation of misacylated Asp-tRNA(Asn) or Glu-tRNA(Gln) in organisms which lack either or both of asparaginyl-tRNA or glutaminyl-tRNA synthetases. The reaction takes place in the presence of glutamine and ATP through an activated phospho-Asp-tRNA(Asn) or phospho-Glu-tRNA(Gln). In Geobacillus kaustophilus (strain HTA426), this protein is Aspartyl/glutamyl-tRNA(Asn/Gln) amidotransferase subunit C.